A 497-amino-acid polypeptide reads, in one-letter code: Glycerol kinase (497 aa).

Thr-12 lines the ADP pocket. Residues Thr-12, Thr-13, and Ser-14 each contribute to the ATP site. Thr-12 lines the sn-glycerol 3-phosphate pocket. Arg-16 lines the ADP pocket. Sn-glycerol 3-phosphate-binding residues include Arg-82, Glu-83, Tyr-134, and Asp-243. Residues Arg-82, Glu-83, Tyr-134, Asp-243, and Gln-244 each coordinate glycerol. ADP-binding residues include Thr-265 and Gly-308. ATP-binding residues include Thr-265, Gly-308, Gln-312, and Gly-409. Residues Gly-409 and Asn-413 each coordinate ADP.

Belongs to the FGGY kinase family. Homotetramer and homodimer (in equilibrium).

It catalyses the reaction glycerol + ATP = sn-glycerol 3-phosphate + ADP + H(+). It functions in the pathway polyol metabolism; glycerol degradation via glycerol kinase pathway; sn-glycerol 3-phosphate from glycerol: step 1/1. Activated by phosphorylation and inhibited by fructose 1,6-bisphosphate (FBP). Key enzyme in the regulation of glycerol uptake and metabolism. Catalyzes the phosphorylation of glycerol to yield sn-glycerol 3-phosphate. This is Glycerol kinase from Caldanaerobacter subterraneus subsp. tengcongensis (strain DSM 15242 / JCM 11007 / NBRC 100824 / MB4) (Thermoanaerobacter tengcongensis).